The chain runs to 549 residues: Urocanate hydratase (549 aa).

Residues 46–47 (GG), glutamine 124, 170–172 (GMG), glutamate 190, arginine 195, 236–237 (NA), 257–261 (QTSAH), 267–268 (YV), and tyrosine 316 each bind NAD(+). Residue cysteine 404 is part of the active site. Residue glycine 486 coordinates NAD(+).

Belongs to the urocanase family. Requires NAD(+) as cofactor.

The protein resides in the cytoplasm. It catalyses the reaction 4-imidazolone-5-propanoate = trans-urocanate + H2O. It functions in the pathway amino-acid degradation; L-histidine degradation into L-glutamate; N-formimidoyl-L-glutamate from L-histidine: step 2/3. Functionally, catalyzes the conversion of urocanate to 4-imidazolone-5-propionate. This is Urocanate hydratase from Natranaerobius thermophilus (strain ATCC BAA-1301 / DSM 18059 / JW/NM-WN-LF).